A 369-amino-acid chain; its full sequence is Histidinol-phosphate aminotransferase (369 aa).

The residue at position 223 (lysine 223) is an N6-(pyridoxal phosphate)lysine.

This sequence belongs to the class-II pyridoxal-phosphate-dependent aminotransferase family. Histidinol-phosphate aminotransferase subfamily. Homodimer. It depends on pyridoxal 5'-phosphate as a cofactor.

The enzyme catalyses L-histidinol phosphate + 2-oxoglutarate = 3-(imidazol-4-yl)-2-oxopropyl phosphate + L-glutamate. The protein operates within amino-acid biosynthesis; L-histidine biosynthesis; L-histidine from 5-phospho-alpha-D-ribose 1-diphosphate: step 7/9. In terms of biological role, catalyzes the conversion of imidazole acetol phosphate to histidinol phosphate. Can also transaminate aromatic amino acids and histidine in addition to histidinol phosphate. The chain is Histidinol-phosphate aminotransferase from Zymomonas mobilis subsp. mobilis (strain ATCC 31821 / ZM4 / CP4).